Here is a 362-residue protein sequence, read N- to C-terminus: Acetylajmalan esterase 2 (362 aa).

A signal peptide spans 1 to 23 (MGFAARPFHIVFSLFVLAGATQA). The active-site Nucleophile is serine 38. Residues asparagine 100, asparagine 118, asparagine 151, and asparagine 202 are each glycosylated (N-linked (GlcNAc...) asparagine). Active-site residues include aspartate 335 and histidine 338.

It belongs to the 'GDSL' lipolytic enzyme family. Confined to roots.

It catalyses the reaction 17-O-acetylnorajmaline + H2O = norajmaline + acetate + H(+). It carries out the reaction 17-O-acetylajmaline + H2O = ajmaline + acetate + H(+). It functions in the pathway alkaloid biosynthesis; ajmaline biosynthesis. Functionally, acetylesterase involved in the biosynthesis of ajmaline-type monoterpenoid indole alkaloids (MIAs) natural products, important plant-derived pharmaceuticals used in the therapy of heart disorders. Deacetylates 17-O-acetylnorajmaline to produce norajmaline. May also catalyze the conversion of 17-O-acetylajmaline to ajmaline. The chain is Acetylajmalan esterase 2 from Rauvolfia serpentina (Serpentine wood).